Here is a 218-residue protein sequence, read N- to C-terminus: DNA-directed RNA polymerases IV and V subunit 5B (218 aa).

It belongs to the archaeal Rpo5/eukaryotic RPB5 RNA polymerase subunit family. As to quaternary structure, component of the RNA polymerase IV and V complexes. Interacts with NRPD1. In terms of tissue distribution, expressed inleaves, flower buds, flowers and siliques.

Its subcellular location is the nucleus. DNA-dependent RNA polymerase catalyzes the transcription of DNA into RNA using the four ribonucleoside triphosphates as substrates. Component of RNA polymerases IV and V which mediate short-interfering RNAs (siRNA) accumulation and subsequent RNA-directed DNA methylation-dependent (RdDM) transcriptional gene silencing (TGS) of endogenous repeated sequences, including transposable elements. The polypeptide is DNA-directed RNA polymerases IV and V subunit 5B (NRPD5B) (Arabidopsis thaliana (Mouse-ear cress)).